Consider the following 368-residue polypeptide: Endoglucanase (368 aa).

An N-terminal signal peptide occupies residues Met-1–Ala-21. Glu-55 functions as the Proton donor in the catalytic mechanism. Asp-116 acts as the Nucleophile in catalysis.

The protein belongs to the glycosyl hydrolase 8 (cellulase D) family.

Its subcellular location is the secreted. The catalysed reaction is Endohydrolysis of (1-&gt;4)-beta-D-glucosidic linkages in cellulose, lichenin and cereal beta-D-glucans.. Its pathway is glycan metabolism; bacterial cellulose biosynthesis. Hydrolyzes carboxymethylcellulose. The sequence is that of Endoglucanase (bcsZ) from Escherichia coli O157:H7.